The primary structure comprises 487 residues: Multiple inositol polyphosphate phosphatase 1 (487 aa).

The signal sequence occupies residues 1 to 30 (MLRAPGCLLRTSVAPAAALAAALLSSLARC). Histidine 89 is an active-site residue. Asparagine 242 and asparagine 481 each carry an N-linked (GlcNAc...) asparagine glycan. Residues 484 to 487 (SDEL) carry the Prevents secretion from ER motif.

Belongs to the histidine acid phosphatase family. MINPP1 subfamily. N-glycosylated. Widely expressed with highest levels in kidney, liver, cerebellum and placenta.

It is found in the endoplasmic reticulum lumen. The protein resides in the secreted. The protein localises to the cell membrane. The catalysed reaction is 1D-myo-inositol hexakisphosphate + H2O = 1D-myo-inositol 1,2,4,5,6-pentakisphosphate + phosphate. It catalyses the reaction 1D-myo-inositol 1,2,4,5,6-pentakisphosphate + H2O = 1D-myo-inositol 1,2,5,6-tetrakisphosphate + phosphate. It carries out the reaction 1D-myo-inositol 1,2,5,6-tetrakisphosphate + H2O = 1D-myo-inositol 1,2,6-trisphosphate + phosphate. The enzyme catalyses 1D-myo-inositol 1,2,6-trisphosphate + H2O = 1D-myo-inositol 1,2-bisphosphate + phosphate. The catalysed reaction is 1D-myo-inositol 1,2-bisphosphate + H2O = 1D-myo-inositol 2-phosphate + phosphate. It catalyses the reaction 1D-myo-inositol hexakisphosphate + H2O = 1D-myo-inositol 1,2,3,5,6-pentakisphosphate + phosphate. It carries out the reaction 1D-myo-inositol 1,2,3,5,6-pentakisphosphate + H2O = 1D-myo-inositol 1,2,3,6-tetrakisphosphate + phosphate. The enzyme catalyses 1D-myo-inositol 1,2,3,6-tetrakisphosphate + H2O = 1D-myo-inositol 1,2,3-trisphosphate + phosphate. The catalysed reaction is 1D-myo-inositol 1,2,3-trisphosphate + H2O = 1D-myo-inositol 2,3-bisphosphate + phosphate. It catalyses the reaction 1D-myo-inositol 2,3-bisphosphate + H2O = 1D-myo-inositol 2-phosphate + phosphate. It carries out the reaction 1D-myo-inositol 1,3,4,5,6-pentakisphosphate + H2O = 1D-myo-inositol 1,4,5,6-tetrakisphosphate + phosphate. The enzyme catalyses 1D-myo-inositol 1,4,5,6-tetrakisphosphate + H2O = 1D-myo-inositol 1,4,5-trisphosphate + phosphate. The catalysed reaction is (2R)-2,3-bisphosphoglycerate + H2O = (2R)-2-phosphoglycerate + phosphate. Multiple inositol polyphosphate phosphatase that hydrolyzes 1D-myo-inositol 1,3,4,5,6-pentakisphosphate (InsP5[2OH]) and 1D-myo-inositol hexakisphosphate (InsP6) to a range of less phosphorylated inositol phosphates. This regulates the availability of these various small molecule second messengers and metal chelators which control many aspects of cell physiology. Has a weak in vitro activity towards 1D-myo-inositol 1,4,5-trisphosphate which is unlikely to be physiologically relevant. By regulating intracellular inositol polyphosphates pools, which act as metal chelators, it may control the availability of intracellular calcium and iron, which are important for proper neuronal development and homeostasis. May have a dual substrate specificity, and function as a 2,3-bisphosphoglycerate 3-phosphatase hydrolyzing 2,3-bisphosphoglycerate to 2-phosphoglycerate. 2,3-bisphosphoglycerate (BPG) is formed as part of the Rapoport-Luebering glycolytic bypass and is a regulator of systemic oxygen homeostasis as the major allosteric effector of hemoglobin. The protein is Multiple inositol polyphosphate phosphatase 1 of Homo sapiens (Human).